Consider the following 3258-residue polypeptide: MVKRKSSEGQEQDGGRGIPLPIQTFLWRQTSAFLRPKLGKQYEASCVSFERVLVENKLHGLSPALSEAIQSISRWELVQAALPHVLHCTATLLSNRNKLGHQDKLGVAETKLLHTLHWMLLEAPQDCNNERFGGTDRGSSWGGSSSAFIHQVENQGSPGQPCQSSSNDEEENNRRKIFQNSMATVELFVFLFAPLVHRIKESDLTFRLASGLVIWQPMWEHRQPGVSGFTALVKPIRNIITAKRSSPINSQSRTCESPNQDARHLEGLQVVCETFQSDSISPKATISGCHRGNSFDGSLSSQTSQERGPSHSRASLVIPPCQRSRYATYFDVAVLRCLLQPHWSEEGTQWSLMYYLQRLRHMLEEKPEKPPEPDIPLLPRPRSSSMVAAAPSLVNTHKTQDLTMKCNEEEKSLSSEAFSKVSLTNLRRSAVPDLSSDLGMNIFKKFKSRKEDRERKGSIPFHHTGKRRPRRMGVPFLLHEDHLDVSPTRSTFSFGSFSGLGEDRRGIEKGGWQTTILGKLTRRGSSDAATEMESLSARHSHSHHTLVSDLPDPSNSHGENTVKEVRSQISTITVATFNTTLASFNVGYADFFNEHMRKLCNQVPIPEMPHEPLACANLPRSLTDSCINYSYLEDTEHIDGTNNFVHKNGMLDLSVVLKAVYLVLNHDISSRICDVALNIVECLLQLGVVPCVEKNRKKSENKENETLEKRPSEGAFQFKGVSGSSTCGFGGPAVSGAGDGGGEEGGGGDGGGGGGDGGGGGGGGGGPYEKNDKNQEKDESTPVSNHRLALTMLIKIVKSLGCAYGCGEGHRGLSGDRLRHQVFRENAQNCLTKLYKLDKMQFRQTMRDYVNKDSLNNVVDFLHALLGFCMEPVTDNKAGFGNNFTTVDNKSTAQNVEGIIVSAMFKSLITRCASTTHELHSPENLGLYCDIRQLVQFIKEAHGNVFRRVALSALLDSAEKLAPGKKVEENEQESKPAGSKRSEAGSIVDKGQVSSAPEECRSFMSGRPSQTPEHDEQMQGANLGRKDFWRKMFKSQSAASDTSSQSEQDTSECTTAHSGTTSDRRARSRSRRISLRKKLKLPIGKRNWLKRSSLSGLADGVEDLLDISSVDRLSFIRQSSKVKFTSAVKLSEGGPGSGMENGRDEEENFFKRLGCHSFDDHLSPNQDGGKSKNVVNLGAIRQGMKRFQFLLNCCEPGTIPDASILAAALDLEAPVVARAALFLECARFVHRCNRGNWPEWMKGHHVNITKKGLSRGRSPIVGNKRNQKLQWNAAKLFYQWGDAIGVRLNELCHGESESPANLLGLIYDEETKRRLRKEDEEEDFLDDSTVNPSKCGCPFALKMAACQLLLEITTFLRETFSCLPRPRTEPLVDLESCRLRLDPELDRHRYERKISFAGVLDENEDSKDSLHSSSHTLKSDAGVEEKKEGSPWSASEPSIEPEGMSNAGAEENYHRNMSWLHVMILLCNQQSFICTHVDYCHPHCYLHHSRSCARLVRAIKLLYGDSVDSLRESSNISSVALRGKKQKECSDKSCLRTPSLKKRVSDANLEGKKDSGMLKYIRLQVMSLSPAPLSLLIKAAPILTEEMYGDIQPAAWELLLSMDEHMAGAAAAMFLLCAVKVPEAVSDMLMSEFHHPETVQRLNAVLKFHTLWRFRYQVWPRMEEGAQQIFKIPPPSINFTLPSPVLGMPSVPMFDPPWVPQCSGSVQDPINEDQSKSFSARAVSRSHQRAEHILKNLQQEEEKKRLGREASLITAIPITQEACYEPTCTPNSEPEEEVEEVTNLASRRLSVSPSCTSSTSHRNYSFRRGSVWSVRSAVSAEDEEHTTEHTPNHHVPQPPQAVFPACICAAVLPIVHLMEDGEVREDGVAVSAVAQQVLWNCLIEDPSTVLRHFLEKLTISNRQDELMYMLRKLLLNIGDFPAQTSHILFNYLVGLIMYFVRTPCEWGMDAISATLTFLWEVVGYVEGLFFKDLKQTMKKEQCEVKLLVTASMPGTKTLVVHGQNECDIPTQLPVHEDTQFEALLKECLEFFNIPESQSTHYFLMDKRWNLIHYNKTYVRDIYPFRRSVSPQLNLVHMHPEKGQELIQKQVFTRKLEEVGRVLFLISLTQKIPTAHKQSHVSMLQEDLLRLPSFPRSAIDAEFSLFSDPQAGKELFGLDTLQKSLWIQLLEEMFLGMPSEFPWGDEIMLFLNVFNGALILHPEDSALLRQYAATVINTAVHFNHLFSLSGYQWILPTMLQVYSDYESNPQLRQAIEFACHQFYILHRKPFVLQLFASVAPLLEFPDAANNGPSKGVSAQCLFDLLQSLEGETTDILDILELVKAEKPLKSLDFCYGNEDLTFSISEAIKLCVTVVAYAPESFRSLQMLMVLEALVPCYLQKLKRQTSQVETVPAAREEIAATAALATSLQALLYSVEVLTRPMTAPQMSRCDQGHKGTTTANHTMSSGVNTRYQEQGAKLHFIRENLHLLEEGQGIPREELDERIAREEFRRPRESLLNICTEFYKHCGPRLKILQNLAGEPRVIALELLDVKSHMRLAEIAHSLLKLAPYDTQTMESRGLRRYIMEMLPITDWTAEAVRPALILILKRLDRMFNKIHKMPTLRRQVEWEPASNLIEGVCLTLQRQPIISFLPHLRSLINVCVNLVMGVVGPSSVADGLPLLHLSPYLSPPLPFSTAVVRLVALQIQALKEDFPLSHVISPFTNQERREGMLLNLLIPFVLTVGSGSKDSPWLEQPEVQLLLQTVINVLLPPRIISTSRSKNFMLESSPAHCSTPGDAGKDLRREGLAESTSQAAYLALKVILVCFERQLGSQWYWLSLQVKEMALRKVGGLALWDFLDFIVRTRIPIFVLLRPFIQCKLLAQPAENHEELSARQHIADQLERRFIPRPLCKSSLIAEFNSELKILKEAVHSGSAYQGKTSISTVGTSTSAYRLSLATMSRSNTGTGTVWEQDSEPSQQASQDTLSRTDEEDEENDSISMPSVVSEQEAYLLSAIGRRRFSSHVSSMSVPQAEVGMLPSQSEPNVLDDSQGLAAEGSLSRVASIQSEPGQQNLLVQQPLGRKRGLRQLRRPLLSRQKTQTEPRNRQGARLSTTRRSIQPKTKPSADQKRSVTFIEAQPEPAAAPTDALPATGQLQGCSPAPSRKPEAMDEPVLTSSPAIVVADLHSVSPKQSENFPTEEGEKEEDTEAQGATAHSPLSAQLSDPDDFTGLETSSLLQHGDTVLHISEENGMENPLLSSQFTFTPTELGKTDAVLDESHV.

Residues 152–173 (VENQGSPGQPCQSSSNDEEENN) form a disordered region. Positions 155–166 (QGSPGQPCQSSS) are enriched in low complexity. A Phosphoserine modification is found at serine 257. Disordered regions lie at residues 291-316 (RGNSFDGSLSSQTSQERGPSHSRASL), 449-468 (RKEDRERKGSIPFHHTGKRR), 522-560 (RRGSSDAATEMESLSARHSHSHHTLVSDLPDPSNSHGEN), 697-717 (KKSENKENETLEKRPSEGAFQ), 732-784 (PAVS…TPVS), 963-1019 (PGKK…EQMQ), 1034-1076 (KSQS…ISLR), 1404-1447 (EDSK…MSNA), and 1817-1836 (AVSAEDEEHTTEHTPNHHVP). Positions 295 to 307 (FDGSLSSQTSQER) are enriched in polar residues. Position 525 is a phosphoserine (serine 525). Over residues 698-712 (KSENKENETLEKRPS) the composition is skewed to basic and acidic residues. Positions 732–767 (PAVSGAGDGGGEEGGGGDGGGGGGDGGGGGGGGGGP) are enriched in gly residues. 2 stretches are compositionally biased toward basic and acidic residues: residues 769-780 (EKNDKNQEKDES) and 965-974 (KKVEENEQES). The segment covering 1035 to 1052 (SQSAASDTSSQSEQDTSE) has biased composition (low complexity). The span at 1066–1076 (ARSRSRRISLR) shows a compositional bias: basic residues. Residues 1417–1429 (LKSDAGVEEKKEG) are compositionally biased toward basic and acidic residues. A run of 4 helical transmembrane segments spans residues 2268-2288 (PFVLQLFASVAPLLEFPDAAN), 2398-2418 (IAATAALATSLQALLYSVEVL), 2785-2805 (GLAESTSQAAYLALKVILVCF), and 2831-2851 (LALWDFLDFIVRTRIPIFVLL). Residues 2942-2964 (NTGTGTVWEQDSEPSQQASQDTL) show a composition bias toward polar residues. The tract at residues 2942–2982 (NTGTGTVWEQDSEPSQQASQDTLSRTDEEDEENDSISMPSV) is disordered. At serine 3042 the chain carries Phosphoserine. The interval 3051 to 3213 (NLLVQQPLGR…DDFTGLETSS (163 aa)) is disordered. The segment covering 3059 to 3068 (GRKRGLRQLR) has biased composition (basic residues). Residues 3088-3100 (RLSTTRRSIQPKT) are compositionally biased toward polar residues. A compositionally biased stretch (low complexity) spans 3117–3129 (PEPAAAPTDALPA). Positions 3175-3186 (PTEEGEKEEDTE) are enriched in acidic residues.

This sequence belongs to the unc-80 family. NALCN complex consists of NALCN and auxiliary subunits, UNC79, UNC80 and NACL1. These auxiliary subunits are essential for the NALCN complex function. Interacts (via N-terminus half) with NALCN; this interaction facilitates NALCN surface localization. Interacts with UNC79. UNC80 bridges NALCN to UNC79. In terms of processing, phosphorylated on tyrosine residues. Moderately expressed in fetal brain, spinal cord, skeletal muscle, thymus, spleen, fetal liver, small intestine, colon, kidney and uterus. Highly expressed in adrenal gland, prostate and testis, as well as in brain and cerebellum.

The protein localises to the cell membrane. Auxiliary subunit of the NALCN sodium channel complex, a voltage-gated ion channel responsible for the resting Na(+) permeability that controls neuronal excitability. Activated by neuropeptides substance P, neurotensin, and extracellular Ca(2+) that regulates neuronal excitability by controlling the sizes of NALCN-dependent sodium-leak current. UNC80 is essential for NALCN sensitivity to extracellular Ca(2+). The polypeptide is Protein unc-80 homolog (Homo sapiens (Human)).